The primary structure comprises 795 residues: MMVESASETIRSAPSGQNGVGSLSAQADGGGGAGTAGTAPAAGRDASGREAASGGADSNGEMSPAELLHFQQQQALQVARQFLLQQASSLNSPGNNDSKQSASAVQVPVSVAMMSQQMLTPQQMQQILSPPQLQALLQQQQALMLQQLQEYYKKQQEQLHLQLLTQQQAGKQQPKEALGNKQLAFQQQLLQMQQLQQQHLLNLQRQGLVSLQPSQASGPLQALPQAVCPTDLPQLWKGEGAPGQPAEDSGRQEGLDLASTAVTATSFASPPKVSPPLSHHPLPNGQPTVLTSRRDSSSHEETPSSHPLYGHGECKWPGCETLCEDLGQFIKHLNTEHALDDRSTAQCRVQMQVVQQLEIQLAKESERLQAMMAHLHMRPSEPKPFSQPVTVSADPFPDGLVHPPTSAAAPVTPLRPPGLGSASLHSGGPARRRSNDKFCSPISSELAQNHEFYKNADVRPPFTYASLIRQAILETPDRQLTLNEIYNWFTRMFAYFRRNTATWKNAVRHNLSLHKCFVRVENVKGAVWTVDEREYQKRRPPKMTGSPTLVKNMISGLSYGALNASYQAALAESSFPLLSNPGMLNPGSASSLLPLSQEDLGVPGEPLPSNGSSSPPRLSPPQYSHQIQVKEEPAEAEEDRRPGPPLGAPNPSTVGPPEDRDLEEDLGGEDMPSQPCPLIPGWKPSLLHLSYCVKPKFTVSVGSKTPSSPLPPPPRVQGSYSLPPCSYLAYGDMRGQNPAPSPGLLSGVGGGLFRCLHRTKSPSLPGVWILAAELETMRFHRPPMGDPQPKTADWV.

Positions 1-25 (MMVESASETIRSAPSGQNGVGSLSA) are enriched in polar residues. The segment at 1 to 62 (MMVESASETI…SGGADSNGEM (62 aa)) is disordered. Over residues 36 to 45 (AGTAPAAGRD) the composition is skewed to low complexity. 2 positions are modified to phosphoserine: S58 and S92. K181 is covalently cross-linked (Glycyl lysine isopeptide (Lys-Gly) (interchain with G-Cter in SUMO2)). Disordered stretches follow at residues 233-252 (PQLW…SGRQ) and 265-310 (TSFA…PLYG). The segment covering 292-303 (SRRDSSSHEETP) has biased composition (basic and acidic residues). Residues 312 to 337 (GECKWPGCETLCEDLGQFIKHLNTEH) form a C2H2-type zinc finger. Residues 354–375 (VQQLEIQLAKESERLQAMMAHL) form a leucine-zipper region. The segment at 379 to 437 (PSEPKPFSQPVTVSADPFPDGLVHPPTSAAAPVTPLRPPGLGSASLHSGGPARRRSNDK) is disordered. A Glycyl lysine isopeptide (Lys-Gly) (interchain with G-Cter in SUMO2) cross-link involves residue K383. Residues 459 to 549 (RPPFTYASLI…PPKMTGSPTL (91 aa)) constitute a DNA-binding region (fork-head). At S546 the chain carries Phosphoserine. Positions 589 to 671 (ASSLLPLSQE…LEEDLGGEDM (83 aa)) are disordered. Residues 609-627 (SNGSSSPPRLSPPQYSHQI) are compositionally biased toward polar residues. Positions 628–642 (QVKEEPAEAEEDRRP) are enriched in basic and acidic residues.

In terms of assembly, forms homodimers and heterodimers with FOXP1 and FOXP2. Dimerization is required for DNA-binding. In terms of tissue distribution, expressed in the adult heart, brain, spleen lung, liver, kidney and testes.

It is found in the nucleus. In terms of biological role, transcriptional repressor that represses lung-specific expression. The polypeptide is Forkhead box protein P4 (Mus musculus (Mouse)).